The primary structure comprises 640 residues: Threonine--tRNA ligase (640 aa).

Residues 1-60 (MKITFPDGAVKEFEPGVSTADIAASISPGLKKKALAGKLNGELLDLVTPIHEDGAIEIVT) form the TGS domain. The tract at residues 241–538 (DHRKLGKELD…LIEEYKGAFP (298 aa)) is catalytic. The Zn(2+) site is built by Cys334, His385, and His515.

Belongs to the class-II aminoacyl-tRNA synthetase family. In terms of assembly, homodimer. Zn(2+) serves as cofactor.

It is found in the cytoplasm. The enzyme catalyses tRNA(Thr) + L-threonine + ATP = L-threonyl-tRNA(Thr) + AMP + diphosphate + H(+). Its function is as follows. Catalyzes the attachment of threonine to tRNA(Thr) in a two-step reaction: L-threonine is first activated by ATP to form Thr-AMP and then transferred to the acceptor end of tRNA(Thr). Also edits incorrectly charged L-seryl-tRNA(Thr). The chain is Threonine--tRNA ligase from Listeria monocytogenes serotype 4b (strain CLIP80459).